Consider the following 61-residue polypeptide: Large ribosomal subunit protein uL29 (61 aa).

Belongs to the universal ribosomal protein uL29 family.

In Campylobacter jejuni subsp. jejuni serotype O:6 (strain 81116 / NCTC 11828), this protein is Large ribosomal subunit protein uL29.